A 689-amino-acid polypeptide reads, in one-letter code: UvrABC system protein B (689 aa).

Positions 1-26 (MSDASGPLQPDRPEADVPFRVEAPFD) are disordered. A Helicase ATP-binding domain is found at 40–422 (AGYEQGAQQQ…ERAQSANVVE (383 aa)). 53–60 (GVTGSGKT) serves as a coordination point for ATP. A Beta-hairpin motif is present at residues 106 to 129 (YYNYYQPEAYVEQTDKYIEKDASI). The region spanning 443–605 (QVEDLMDRID…TTPTTIEKAV (163 aa)) is the Helicase C-terminal domain. Residues 632–667 (ALLVEDLEARMEDAASNLEFELAADIRDRMRELREA) enclose the UVR domain. Positions 668 to 689 (FDLDGGDAPEDPGGVAPETEDW) are disordered.

Belongs to the UvrB family. As to quaternary structure, forms a heterotetramer with UvrA during the search for lesions. Interacts with UvrC in an incision complex.

Its subcellular location is the cytoplasm. The UvrABC repair system catalyzes the recognition and processing of DNA lesions. A damage recognition complex composed of 2 UvrA and 2 UvrB subunits scans DNA for abnormalities. Upon binding of the UvrA(2)B(2) complex to a putative damaged site, the DNA wraps around one UvrB monomer. DNA wrap is dependent on ATP binding by UvrB and probably causes local melting of the DNA helix, facilitating insertion of UvrB beta-hairpin between the DNA strands. Then UvrB probes one DNA strand for the presence of a lesion. If a lesion is found the UvrA subunits dissociate and the UvrB-DNA preincision complex is formed. This complex is subsequently bound by UvrC and the second UvrB is released. If no lesion is found, the DNA wraps around the other UvrB subunit that will check the other stand for damage. The chain is UvrABC system protein B from Halobacterium salinarum (strain ATCC 700922 / JCM 11081 / NRC-1) (Halobacterium halobium).